Reading from the N-terminus, the 511-residue chain is UDP-N-acetylmuramate--L-alanine ligase (511 aa).

Gly127 to Thr133 serves as a coordination point for ATP. A disordered region spans residues Val481 to Gly511. Residues Val484–Ala504 show a composition bias toward gly residues.

It belongs to the MurCDEF family.

The protein resides in the cytoplasm. It catalyses the reaction UDP-N-acetyl-alpha-D-muramate + L-alanine + ATP = UDP-N-acetyl-alpha-D-muramoyl-L-alanine + ADP + phosphate + H(+). It functions in the pathway cell wall biogenesis; peptidoglycan biosynthesis. Functionally, cell wall formation. This Salinispora arenicola (strain CNS-205) protein is UDP-N-acetylmuramate--L-alanine ligase.